The primary structure comprises 332 residues: N-acetyl-gamma-glutamyl-phosphate reductase (332 aa).

Residue cysteine 144 is part of the active site.

The protein belongs to the NAGSA dehydrogenase family. Type 1 subfamily.

It localises to the cytoplasm. The enzyme catalyses N-acetyl-L-glutamate 5-semialdehyde + phosphate + NADP(+) = N-acetyl-L-glutamyl 5-phosphate + NADPH + H(+). Its pathway is amino-acid biosynthesis; L-arginine biosynthesis; N(2)-acetyl-L-ornithine from L-glutamate: step 3/4. In terms of biological role, catalyzes the NADPH-dependent reduction of N-acetyl-5-glutamyl phosphate to yield N-acetyl-L-glutamate 5-semialdehyde. The protein is N-acetyl-gamma-glutamyl-phosphate reductase of Archaeoglobus fulgidus (strain ATCC 49558 / DSM 4304 / JCM 9628 / NBRC 100126 / VC-16).